Here is a 137-residue protein sequence, read N- to C-terminus: Venom allergen 4 (137 aa).

Positions 1–19 are cleaved as a signal peptide; it reads MKTFVLVSCLLVFTQIIYA.

Belongs to the ant venom allergen 2/4 family. Monomer. In terms of tissue distribution, expressed by the venom gland.

The protein resides in the secreted. This Solenopsis geminata (Tropical fire ant) protein is Venom allergen 4.